Reading from the N-terminus, the 115-residue chain is MRFFLSGYVGRRIGETFPWGTFVVNVSGAFVIGTAAGLGARLGGIFSTTIFHEFIMVGLLGGYTTVSSFCLQSVNLMLDGEQRQALFNIVASALLCVLAVAAGYGGIMWIMEWPG.

The next 2 helical transmembrane spans lie at 19-39 and 42-62; these read WGTF…AGLG and LGGI…LLGG. Positions 61 and 64 each coordinate Na(+). Residues 89-109 traverse the membrane as a helical segment; that stretch reads IVASALLCVLAVAAGYGGIMW.

It belongs to the fluoride channel Fluc/FEX (TC 1.A.43) family.

Its subcellular location is the cell inner membrane. It carries out the reaction fluoride(in) = fluoride(out). Its activity is regulated as follows. Na(+) is not transported, but it plays an essential structural role and its presence is essential for fluoride channel function. Functionally, fluoride-specific ion channel. Important for reducing fluoride concentration in the cell, thus reducing its toxicity. The polypeptide is Fluoride-specific ion channel FluC 4 (Brucella melitensis biotype 1 (strain ATCC 23456 / CCUG 17765 / NCTC 10094 / 16M)).